The primary structure comprises 156 residues: Small ribosomal subunit protein uS7 (156 aa).

The protein belongs to the universal ribosomal protein uS7 family. As to quaternary structure, part of the 30S ribosomal subunit. Contacts proteins S9 and S11.

Its function is as follows. One of the primary rRNA binding proteins, it binds directly to 16S rRNA where it nucleates assembly of the head domain of the 30S subunit. Is located at the subunit interface close to the decoding center, probably blocks exit of the E-site tRNA. This is Small ribosomal subunit protein uS7 from Desulfosudis oleivorans (strain DSM 6200 / JCM 39069 / Hxd3) (Desulfococcus oleovorans).